We begin with the raw amino-acid sequence, 335 residues long: Mycobacterial beta-ketoacyl-[acyl-carrier-protein] synthase III (335 aa).

Residues cysteine 122 and histidine 258 contribute to the active site. Residues glutamine 259–arginine 263 form an ACP-binding region. The active site involves asparagine 289.

This sequence belongs to the thiolase-like superfamily. FabH family. In terms of assembly, homodimer.

It localises to the cytoplasm. It catalyses the reaction malonyl-[ACP] + dodecanoyl-CoA + H(+) = 3-oxotetradecanoyl-[ACP] + CO2 + CoA. It functions in the pathway lipid metabolism; fatty acid biosynthesis. Its pathway is lipid metabolism; mycolic acid biosynthesis. Its function is as follows. Catalyzes the condensation reaction of fatty acid synthesis by the addition to an acyl acceptor of two carbons from malonyl-ACP. Catalyzes the first condensation reaction which initiates fatty acid synthesis and may therefore play a role in governing the total rate of fatty acid production. Possesses both acetoacetyl-ACP synthase and acetyl transacylase activities. Its substrate specificity determines the biosynthesis of branched-chain and/or straight-chain of fatty acids. The sequence is that of Mycobacterial beta-ketoacyl-[acyl-carrier-protein] synthase III from Mycolicibacterium paratuberculosis (strain ATCC BAA-968 / K-10) (Mycobacterium paratuberculosis).